The chain runs to 583 residues: Eukaryotic translation initiation factor 3 subunit D (583 aa).

The disordered stretch occupies residues Gly-116–Gly-150. Over residues Gln-140–Gly-149 the composition is skewed to basic and acidic residues. Residues Ser-298–Pro-312 are RNA gate. Positions Asn-561 to Glu-583 are disordered. The segment covering Phe-563 to Glu-583 has biased composition (acidic residues).

It belongs to the eIF-3 subunit D family. Component of the eukaryotic translation initiation factor 3 (eIF-3) complex.

It is found in the cytoplasm. Its function is as follows. mRNA cap-binding component of the eukaryotic translation initiation factor 3 (eIF-3) complex, which is involved in protein synthesis of a specialized repertoire of mRNAs and, together with other initiation factors, stimulates binding of mRNA and methionyl-tRNAi to the 40S ribosome. The eIF-3 complex specifically targets and initiates translation of a subset of mRNAs involved in cell proliferation. In the eIF-3 complex, eif3d specifically recognizes and binds the 7-methylguanosine cap of a subset of mRNAs. This chain is Eukaryotic translation initiation factor 3 subunit D, found in Aspergillus oryzae (strain ATCC 42149 / RIB 40) (Yellow koji mold).